A 165-amino-acid polypeptide reads, in one-letter code: Cyclic pyranopterin monophosphate synthase (165 aa).

Substrate contacts are provided by residues 83 to 85 (FCH) and 120 to 121 (ME). The active site involves Asp135.

It belongs to the MoaC family. As to quaternary structure, homohexamer; trimer of dimers.

It carries out the reaction (8S)-3',8-cyclo-7,8-dihydroguanosine 5'-triphosphate = cyclic pyranopterin phosphate + diphosphate. It participates in cofactor biosynthesis; molybdopterin biosynthesis. In terms of biological role, catalyzes the conversion of (8S)-3',8-cyclo-7,8-dihydroguanosine 5'-triphosphate to cyclic pyranopterin monophosphate (cPMP). This chain is Cyclic pyranopterin monophosphate synthase, found in Xanthomonas campestris pv. campestris (strain B100).